The primary structure comprises 216 residues: MNIQLSPLEARVIGCLIEKEVTTPDHYPLTLNSLTTACNQKSNREPVLNLSEAEVQDTVEGLIARRLVSDESSFNSRTSKYQHRFCNTEFGDLKLNQQELGLICCLLLRGAQTPGELRTRTNRLCTFTDVKETEAVLERLANRDSGALVVKLPREPGKRESRYHHLFCGEVDMAAFATSSDNEANASSQYAELEQEVAALREEVAELRALIEQHLS.

It belongs to the UPF0502 family.

The protein is UPF0502 protein VCM66_A0698 of Vibrio cholerae serotype O1 (strain M66-2).